Reading from the N-terminus, the 171-residue chain is Putative MucR family transcriptional regulatory protein y4pD (171 aa).

It belongs to the ros/MucR family.

The protein is Putative MucR family transcriptional regulatory protein y4pD of Sinorhizobium fredii (strain NBRC 101917 / NGR234).